The following is a 181-amino-acid chain: Probable nicotinate-nucleotide adenylyltransferase (181 aa).

Belongs to the NadD family.

It carries out the reaction nicotinate beta-D-ribonucleotide + ATP + H(+) = deamido-NAD(+) + diphosphate. It participates in cofactor biosynthesis; NAD(+) biosynthesis; deamido-NAD(+) from nicotinate D-ribonucleotide: step 1/1. Its function is as follows. Catalyzes the reversible adenylation of nicotinate mononucleotide (NaMN) to nicotinic acid adenine dinucleotide (NaAD). In Campylobacter jejuni subsp. jejuni serotype O:6 (strain 81116 / NCTC 11828), this protein is Probable nicotinate-nucleotide adenylyltransferase.